Reading from the N-terminus, the 462-residue chain is Bifunctional protein GlmU (462 aa).

A pyrophosphorylase region spans residues 1 to 235 (MSYINFSAII…TFEIMGVNSK (235 aa)). UDP-N-acetyl-alpha-D-glucosamine contacts are provided by residues 11 to 14 (LAAG), Lys25, Gln80, 85 to 86 (GT), 107 to 109 (YGD), Gly144, Glu159, and Asn233. Asp109 provides a ligand contact to Mg(2+). Mg(2+) is bound at residue Asn233. The interval 236–256 (SDFVDLDKQYQQRKVQCLLSS) is linker. Positions 257 to 462 (GLMIIDPNRF…LNWKRLKNKK (206 aa)) are N-acetyltransferase. The UDP-N-acetyl-alpha-D-glucosamine site is built by Arg339 and Lys357. Catalysis depends on His369, which acts as the Proton acceptor. The UDP-N-acetyl-alpha-D-glucosamine site is built by Tyr372 and Asn383. Acetyl-CoA-binding positions include Ala386, 392-393 (NY), Ala429, and Arg446.

The protein in the N-terminal section; belongs to the N-acetylglucosamine-1-phosphate uridyltransferase family. It in the C-terminal section; belongs to the transferase hexapeptide repeat family. As to quaternary structure, homotrimer. Mg(2+) is required as a cofactor.

Its subcellular location is the cytoplasm. The enzyme catalyses alpha-D-glucosamine 1-phosphate + acetyl-CoA = N-acetyl-alpha-D-glucosamine 1-phosphate + CoA + H(+). It carries out the reaction N-acetyl-alpha-D-glucosamine 1-phosphate + UTP + H(+) = UDP-N-acetyl-alpha-D-glucosamine + diphosphate. The protein operates within nucleotide-sugar biosynthesis; UDP-N-acetyl-alpha-D-glucosamine biosynthesis; N-acetyl-alpha-D-glucosamine 1-phosphate from alpha-D-glucosamine 6-phosphate (route II): step 2/2. It functions in the pathway nucleotide-sugar biosynthesis; UDP-N-acetyl-alpha-D-glucosamine biosynthesis; UDP-N-acetyl-alpha-D-glucosamine from N-acetyl-alpha-D-glucosamine 1-phosphate: step 1/1. Its pathway is bacterial outer membrane biogenesis; LPS lipid A biosynthesis. In terms of biological role, catalyzes the last two sequential reactions in the de novo biosynthetic pathway for UDP-N-acetylglucosamine (UDP-GlcNAc). The C-terminal domain catalyzes the transfer of acetyl group from acetyl coenzyme A to glucosamine-1-phosphate (GlcN-1-P) to produce N-acetylglucosamine-1-phosphate (GlcNAc-1-P), which is converted into UDP-GlcNAc by the transfer of uridine 5-monophosphate (from uridine 5-triphosphate), a reaction catalyzed by the N-terminal domain. This Blochmanniella pennsylvanica (strain BPEN) protein is Bifunctional protein GlmU.